Consider the following 604-residue polypeptide: Prostaglandin G/H synthase 2 (604 aa).

An N-terminal signal peptide occupies residues 1–17 (MLARALLLCAAVALSGA). The EGF-like domain occupies 18 to 55 (ANPCCSHPCQNRGVCMSVGFDQYKCDCTRTGFYGENCT). 4 cysteine pairs are disulfide-bonded: Cys-21–Cys-32, Cys-22–Cys-145, Cys-26–Cys-42, and Cys-44–Cys-54. Asn-53 carries N-linked (GlcNAc...) asparagine glycosylation. Arg-106 lines the substrate pocket. An N-linked (GlcNAc...) asparagine glycan is attached at Asn-130. The Proton acceptor role is filled by His-193. Tyr-341 lines the substrate pocket. Tyr-371 acts as the For cyclooxygenase activity in catalysis. Heme b is bound at residue His-374. The N-linked (GlcNAc...) asparagine glycan is linked to Asn-396. Cys-526 is modified (S-nitrosocysteine). Residues Cys-555 and Cys-561 are joined by a disulfide bond. The residue at position 565 (Ser-565) is an O-acetylserine. Asn-580 is a glycosylation site (N-linked (GlcNAc...) asparagine).

This sequence belongs to the prostaglandin G/H synthase family. As to quaternary structure, homodimer. Heme b is required as a cofactor. Post-translationally, S-nitrosylation by NOS2 (iNOS) activates enzyme activity. S-nitrosylation may take place on different Cys residues in addition to Cys-526. Acetylated at Ser-565 by SPHK1. During neuroinflammation, acetylation by SPHK1 promotes neuronal secretion of specialized preresolving mediators (SPMs), especially 15-R-lipoxin A4, which results in an increase of phagocytic microglia.

It localises to the microsome membrane. Its subcellular location is the endoplasmic reticulum membrane. It is found in the nucleus inner membrane. The protein resides in the nucleus outer membrane. The catalysed reaction is (5Z,8Z,11Z,14Z)-eicosatetraenoate + AH2 + 2 O2 = prostaglandin H2 + A + H2O. It carries out the reaction (5Z,8Z,11Z,14Z)-eicosatetraenoate + 2 O2 = prostaglandin G2. The enzyme catalyses prostaglandin G2 + AH2 = prostaglandin H2 + A + H2O. It catalyses the reaction (5Z,8Z,11Z,14Z,17Z)-eicosapentaenoate + 2 O2 = prostaglandin G3. The catalysed reaction is prostaglandin G3 + AH2 = prostaglandin H3 + A + H2O. It carries out the reaction (8Z,11Z,14Z)-eicosatrienoate + 2 O2 = prostaglandin G1. The enzyme catalyses prostaglandin G1 + AH2 = prostaglandin H1 + A + H2O. It catalyses the reaction 2-(5Z,8Z,11Z,14Z)-eicosatetraenoyl-sn-glycero-3-phosphoethanolamine + 2 O2 = 2-(prostaglandin G2)-sn-glycero-3-phosphoethanolamine. The catalysed reaction is 2-(prostaglandin G2)-sn-glycero-3-phosphoethanolamine + AH2 = 2-(prostaglandin H2)-sn-glycero-3-phosphoethanolamine + A + H2O. It carries out the reaction 2-(5Z,8Z,11Z,14Z)-eicosatetraenoyl-sn-glycero-3-phosphocholine + 2 O2 = 2-(prostaglandin G2)-sn-glycero-3-phosphocholine. The enzyme catalyses 2-(prostaglandin G2)-sn-glycero-3-phosphocholine + AH2 = 2-(prostaglandin H2)-sn-glycero-3-phosphocholine + A + H2O. It catalyses the reaction (15S)-hydroperoxy-(5Z,8Z,11Z,13E)-eicosatetraenoate + AH2 = (15S)-hydroxy-(5Z,8Z,11Z,13E)-eicosatetraenoate + A + H2O. The catalysed reaction is 2-(5Z,8Z,11Z,14Z)-eicosatetraenoyl-sn-glycero-3-phosphocholine + AH2 + O2 = 2-[(15S)-hydroxy-(5Z,8Z,11Z,13E)-eicosatetraenoyl]-sn-glycero-3-phosphocholine + A + H2O. It carries out the reaction 2-(5Z,8Z,11Z,14Z)-eicosatetraenoyl-sn-glycero-3-phosphocholine + AH2 + O2 = 2-[(15R)-hydroxy-(5Z,8Z,11Z,13E)-eicosatetraenoyl]-sn-glycero-3-phosphocholine + A + H2O. The enzyme catalyses 2-(5Z,8Z,11Z,14Z)-eicosatetraenoyl-sn-glycero-3-phosphocholine + AH2 + O2 = 2-[(11R)-hydroxy-(5Z,8Z,12E,14Z)-eicosatetraenoyl]-sn-glycero-3-phosphocholine + A + H2O. It catalyses the reaction (9Z,12Z)-octadecadienoate + AH2 + O2 = 9-hydroxy-(10E,12Z)-octadecadienoate + A + H2O. The catalysed reaction is (9Z,12Z)-octadecadienoate + AH2 + O2 = 13-hydroxy-(9Z,11E)-octadecadienoate + A + H2O. It carries out the reaction (5Z,8Z,11Z,14Z)-eicosatetraenoate + AH2 + O2 = (15R)-hydroxy-(5Z,8Z,11Z,13E)-eicosatetraenoate + A + H2O. The enzyme catalyses (5Z,8Z,11Z,14Z)-eicosatetraenoate + AH2 + O2 = (11R)-hydroxy-(5Z,8Z,12E,14Z)-eicosatetraenoate + A + H2O. It catalyses the reaction (5Z,8Z,11Z,14Z,17Z)-eicosapentaenoate + AH2 + O2 = (11R)-hydroxy-(5Z,8Z,12E,14Z,17Z)-eicosapentaenoate + A + H2O. The catalysed reaction is (5Z,8Z,11Z,14Z,17Z)-eicosapentaenoate + AH2 + O2 = (18S)-hydroxy-(5Z,8Z,11Z,14Z,16E)-eicosapentaenoate + A + H2O. It carries out the reaction (5Z,8Z,11Z,14Z,17Z)-eicosapentaenoate + AH2 + O2 = (18R)-hydroxy-(5Z,8Z,11Z,14Z,16E)-eicosapentaenoate + A + H2O. The enzyme catalyses (5Z,8Z,11Z,14Z,17Z)-eicosapentaenoate + AH2 + O2 = (15R)-hydroxy-(5Z,8Z,11Z,13E,17Z)-eicosapentaenoate + A + H2O. It catalyses the reaction (5Z,8Z,11Z,14Z,17Z)-eicosapentaenoate + AH2 + O2 = (15S)-hydroxy-(5Z,8Z,11Z,13E,17Z)-eicosapentaenoate + A + H2O. The catalysed reaction is (7Z,10Z,13Z,16Z,19Z)-docosapentaenoate + AH2 + O2 = 13R-hydroxy-(7Z,10Z,14E,16Z,19Z)-docosapentaenoate + A + H2O. It carries out the reaction (4Z,7Z,10Z,13Z,16Z,19Z)-docosahexaenoate + AH2 + O2 = 13-hydroxy-(4Z,7Z,10Z,14E,16Z,19Z)-docosahexaenoate + A + H2O. The enzyme catalyses (5S)-hydroxy-(6E,8Z,11Z,14Z)-eicosatetraenoate + AH2 + O2 = (5S,15R)-dihydroxy-(6E,8Z,11Z,13E)-eicosatetraenoate + A + H2O. It catalyses the reaction (4Z,7Z,10Z,13Z,16Z,19Z)-docosahexaenoate + AH2 + O2 = 17R-hydroxy-(4Z,7Z,10Z,13Z,15E,19Z)-docosahexaenoate + A + H2O. The catalysed reaction is (5S)-hydroxy-(6E,8Z,11Z,14Z)-eicosatetraenoate + AH2 + O2 = (5S,15S)-dihydroxy-(6E,8Z,11Z,13E)-eicosatetraenoate + A + H2O. It carries out the reaction (5S)-hydroxy-(6E,8Z,11Z,14Z)-eicosatetraenoate + AH2 + O2 = (5S,11R)-dihydroxy-(6E,8Z,12E,14Z)-eicosatetraenoate + A + H2O. The enzyme catalyses 2-(5Z,8Z,11Z,14Z-eicosatetraenoyl)-glycerol + 2 O2 = 2-glyceryl-prostaglandin G2. It catalyses the reaction 2-glyceryl-prostaglandin G2 + AH2 = 2-glyceryl-prostaglandin H2 + A + H2O. The catalysed reaction is (5Z,8Z,11Z,14Z)-eicosatetraenoate + O2 = (15R)-hydroperoxy-(5Z,8Z,11Z,13E)-eicosatetraenoate. It carries out the reaction (5Z,8Z,11Z,14Z)-eicosatetraenoate + O2 = 11R-hydroperoxy-(5Z,8Z,12E,14Z)-eicosatetraenoate. The enzyme catalyses (9Z,12Z)-octadecadienoate + AH2 + O2 = (9R)-hydroxy-(10E,12Z)-octadecadienoate + A + H2O. It catalyses the reaction (9Z,12Z)-octadecadienoate + AH2 + O2 = (9S)-hydroxy-(10E,12Z)-octadecadienoate + A + H2O. The catalysed reaction is (9Z,12Z)-octadecadienoate + AH2 + O2 = (13S)-hydroxy-(9Z,11E)-octadecadienoate + A + H2O. It carries out the reaction (9Z,12Z)-octadecadienoate + AH2 + O2 = (13R)-hydroxy-(9Z,11E)-octadecadienoate + A + H2O. It participates in lipid metabolism; prostaglandin biosynthesis. Its function is as follows. Dual cyclooxygenase and peroxidase in the biosynthesis pathway of prostanoids, a class of C20 oxylipins mainly derived from arachidonate ((5Z,8Z,11Z,14Z)-eicosatetraenoate, AA, C20:4(n-6)), with a particular role in the inflammatory response. The cyclooxygenase activity oxygenates AA to the hydroperoxy endoperoxide prostaglandin G2 (PGG2), and the peroxidase activity reduces PGG2 to the hydroxy endoperoxide prostaglandin H2 (PGH2), the precursor of all 2-series prostaglandins and thromboxanes. This complex transformation is initiated by abstraction of hydrogen at carbon 13 (with S-stereochemistry), followed by insertion of molecular O2 to form the endoperoxide bridge between carbon 9 and 11 that defines prostaglandins. The insertion of a second molecule of O2 (bis-oxygenase activity) yields a hydroperoxy group in PGG2 that is then reduced to PGH2 by two electrons. Similarly catalyzes successive cyclooxygenation and peroxidation of dihomo-gamma-linoleate (DGLA, C20:3(n-6)) and eicosapentaenoate (EPA, C20:5(n-3)) to corresponding PGH1 and PGH3, the precursors of 1- and 3-series prostaglandins. In an alternative pathway of prostanoid biosynthesis, converts 2-arachidonoyl lysophopholipids to prostanoid lysophopholipids, which are then hydrolyzed by intracellular phospholipases to release free prostanoids. Metabolizes 2-arachidonoyl glycerol yielding the glyceryl ester of PGH2, a process that can contribute to pain response. Generates lipid mediators from n-3 and n-6 polyunsaturated fatty acids (PUFAs) via a lipoxygenase-type mechanism. Oxygenates PUFAs to hydroperoxy compounds and then reduces them to corresponding alcohols. Plays a role in the generation of resolution phase interaction products (resolvins) during both sterile and infectious inflammation. Metabolizes docosahexaenoate (DHA, C22:6(n-3)) to 17R-HDHA, a precursor of the D-series resolvins (RvDs). As a component of the biosynthetic pathway of E-series resolvins (RvEs), converts eicosapentaenoate (EPA, C20:5(n-3)) primarily to 18S-HEPE that is further metabolized by ALOX5 and LTA4H to generate 18S-RvE1 and 18S-RvE2. In vascular endothelial cells, converts docosapentaenoate (DPA, C22:5(n-3)) to 13R-HDPA, a precursor for 13-series resolvins (RvTs) shown to activate macrophage phagocytosis during bacterial infection. In activated leukocytes, contributes to oxygenation of hydroxyeicosatetraenoates (HETE) to diHETES (5,15-diHETE and 5,11-diHETE). Can also use linoleate (LA, (9Z,12Z)-octadecadienoate, C18:2(n-6)) as substrate and produce hydroxyoctadecadienoates (HODEs) in a regio- and stereospecific manner, being (9R)-HODE ((9R)-hydroxy-(10E,12Z)-octadecadienoate) and (13S)-HODE ((13S)-hydroxy-(9Z,11E)-octadecadienoate) its major products. During neuroinflammation, plays a role in neuronal secretion of specialized preresolving mediators (SPMs) 15R-lipoxin A4 that regulates phagocytic microglia. This chain is Prostaglandin G/H synthase 2 (PTGS2), found in Bos taurus (Bovine).